The chain runs to 418 residues: MTLLALGINHKTAPVALRERVTFTPDTLEQALNSLMAQPLIQGGVVLSTCNRTELYLSVEQQENLQDQLIAWLCDYHQLSPDEVLKSLYWHHGNEAVSHLMRVASGLDSLVLGEPQILGQVKKAFADSQRGHSLSGELERMFQKSFSVAKRVRTETEIGASAVSVAFAACTLARQIFESLTTVNVLLVGAGETIELAARHLHQHKVKKLMIANRTRERAQVLAAEVEAEVISLADIDERLAEADIIISSTASPLPIIGKGMVERALKKRRNQPMLLVDIAVPRDVEPDVGKLPNAYLYSVDDLQAIIESNMAQRQAAAVEAETIVVQESSDFMSWLRAQSAVETIREYRAQADEARAELEARAIQSLQQGADAEKVLRDLAHKLTNRLIHAPTKSLQQAARDGDGERLQILRDGLGLE.

Substrate-binding positions include 49–52, Ser109, 114–116, and Gln120; these read TCNR and EPQ. The active-site Nucleophile is Cys50. 189 to 194 contributes to the NADP(+) binding site; that stretch reads GAGETI.

Belongs to the glutamyl-tRNA reductase family. In terms of assembly, homodimer.

The catalysed reaction is (S)-4-amino-5-oxopentanoate + tRNA(Glu) + NADP(+) = L-glutamyl-tRNA(Glu) + NADPH + H(+). It participates in porphyrin-containing compound metabolism; protoporphyrin-IX biosynthesis; 5-aminolevulinate from L-glutamyl-tRNA(Glu): step 1/2. In terms of biological role, catalyzes the NADPH-dependent reduction of glutamyl-tRNA(Glu) to glutamate 1-semialdehyde (GSA). The polypeptide is Glutamyl-tRNA reductase (Erwinia tasmaniensis (strain DSM 17950 / CFBP 7177 / CIP 109463 / NCPPB 4357 / Et1/99)).